The sequence spans 344 residues: Beta-1,4-galactosyltransferase 4 (344 aa).

At 1 to 12 (MGFNLTFHLSYK) the chain is on the cytoplasmic side. A helical; Signal-anchor for type II membrane protein membrane pass occupies residues 13–38 (FRLLLLLTLCLTVVGWATSNYFVGAI). Over 39-344 (QEIPKAKEFM…NITVDFWFGA (306 aa)) the chain is Lumenal. Residues cysteine 77 and cysteine 118 are joined by a disulfide bond. UDP-alpha-D-galactose is bound by residues 129 to 133 (PHRNR), 168 to 170 (FNR), and 195 to 196 (VD). Residues cysteine 189 and cysteine 208 are joined by a disulfide bond. Aspartate 196 is a binding site for Mn(2+). The N-linked (GlcNAc...) asparagine glycan is linked to asparagine 220. Residues tyrosine 224 and tryptophan 256 each coordinate UDP-alpha-D-galactose. An N-acetyl-D-glucosamine-binding site is contributed by 258-261 (GEDD). Residue histidine 289 participates in Mn(2+) binding. Position 289–291 (289–291 (HTR)) interacts with UDP-alpha-D-galactose. Arginine 301 contributes to the N-acetyl-D-glucosamine binding site. A glycan (N-linked (GlcNAc...) asparagine) is linked at asparagine 335.

The protein belongs to the glycosyltransferase 7 family. Interacts with SLC35A2 (isoform 2; UGT1). Requires Mn(2+) as cofactor. Post-translationally, N-glycosylated. Highest expression is observed in placenta, pancreas, kidney and heart. Expressed in corneal epithelial cells.

Its subcellular location is the golgi apparatus membrane. It is found in the secreted. The enzyme catalyses N-acetyl-D-glucosamine + UDP-alpha-D-galactose = beta-D-galactosyl-(1-&gt;4)-N-acetyl-D-glucosamine + UDP + H(+). The catalysed reaction is a beta-D-GlcNAc-(1-&gt;3)-beta-D-Gal-(1-&gt;4)-beta-D-Glc-(1&lt;-&gt;1)-Cer(d18:1(4E)) + UDP-alpha-D-galactose = a neolactoside nLc4Cer(d18:1(4E)) + UDP + H(+). It catalyses the reaction 3-O-{beta-D-galactosyl-(1-&gt;3)-[6-O-sulfo-N-acetyl-beta-D-glucosaminyl-(1-&gt;6)]-N-acetyl-alpha-D-galactosaminyl}-L-seryl-[protein] + UDP-alpha-D-galactose = 3-O-{beta-D-galactosyl-(1-&gt;3)-[beta-D-galactosyl-(1-&gt;4)-6-O-sulfo-N-acetyl-beta-D-glucosaminyl-(1-&gt;6)]-N-acetyl-alpha-D-galactosaminyl}-L-seryl-[protein] + UDP + H(+). It carries out the reaction 3-O-{beta-D-galactosyl-(1-&gt;3)-[6-O-sulfo-N-acetyl-beta-D-glucosaminyl-(1-&gt;6)]-N-acetyl-alpha-D-galactosaminyl}-L-threonyl-[protein] + UDP-alpha-D-galactose = 3-O-{beta-D-galactosyl-(1-&gt;3)-[beta-D-galactosyl-(1-&gt;4)-6-O-sulfo-N-acetyl-beta-D-glucosaminyl-(1-&gt;6)]-N-acetyl-alpha-D-galactosaminyl}-L-threonyl-[protein] + UDP + H(+). The protein operates within protein modification; protein glycosylation. Its pathway is glycolipid biosynthesis. Its activity is regulated as follows. Up-regulated by LALBA. Its function is as follows. Galactose (Gal) transferase involved in the synthesis of terminal N-acetyllactosamine (LacNac) unit present on glycan chains of glycoproteins and glycosphingolipids. Catalyzes the transfer of Gal residue via a beta1-&gt;4 linkage from UDP-Gal to the non-reducing terminal N-acetyl glucosamine 6-O-sulfate (6-O-sulfoGlcNAc) in the linearly growing chain of both N- and O-linked keratan sulfate proteoglycans. Cooperates with B3GNT7 N-acetyl glucosamine transferase and CHST6 and CHST1 sulfotransferases to construct and elongate mono- and disulfated disaccharide units [-&gt;3Galbeta1-&gt;4(6-sulfoGlcNAcbeta)1-&gt;] and [-&gt;3(6-sulfoGalbeta)1-&gt;4(6-sulfoGlcNAcbeta)1-&gt;] within keratan sulfate polymer. Transfers Gal residue via a beta1-&gt;4 linkage to terminal 6-O-sulfoGlcNAc within the LacNac unit of core 2 O-glycans forming 6-sulfo-sialyl-Lewis X (sLex). May contribute to the generation of sLex epitope on mucin-type glycoproteins that serve as ligands for SELL/L-selectin, a major regulator of leukocyte migration. In the biosynthesis pathway of neolacto-series glycosphingolipids, transfers Gal residue via a beta1-&gt;4 linkage to terminal GlcNAc of a lactotriaosylceramide (Lc3Cer) acceptor to form a neolactotetraosylceramide. The sequence is that of Beta-1,4-galactosyltransferase 4 from Homo sapiens (Human).